Reading from the N-terminus, the 85-residue chain is Neurotoxin BmKAEP2 (85 aa).

The N-terminal stretch at 1–21 (MKLFLLLVISASMLIDGLVNA) is a signal peptide. The LCN-type CS-alpha/beta domain occupies 22–82 (DGYIRGSNGC…TWKSESNTCG (61 aa)). Cystine bridges form between cysteine 31/cysteine 81, cysteine 35/cysteine 56, cysteine 42/cysteine 63, and cysteine 46/cysteine 65.

It belongs to the long (4 C-C) scorpion toxin superfamily. Sodium channel inhibitor family. Beta subfamily. As to expression, expressed by the venom gland.

It localises to the secreted. In terms of biological role, depressant insect beta-toxins cause a transient contraction paralysis followed by a slow flaccid paralysis. They bind voltage-independently at site-4 of sodium channels (Nav) and shift the voltage of activation toward more negative potentials thereby affecting sodium channel activation and promoting spontaneous and repetitive firing. This toxin is active only on insects. Has potential anti-epilepsy effect. This Olivierus martensii (Manchurian scorpion) protein is Neurotoxin BmKAEP2.